The chain runs to 1222 residues: BOS complex subunit NOMO1 (1222 aa).

The first 31 residues, 1 to 31 (MLVGQGAGPLGPAVVTAAVVLLLSGVGPAHG), serve as a signal peptide directing secretion. Topologically, residues 32–1155 (SEDIVVGCGG…NPTRKLPEQD (1124 aa)) are extracellular. N-linked (GlcNAc...) asparagine glycans are attached at residues asparagine 50, asparagine 218, and asparagine 618. The helical transmembrane segment at 1156–1176 (IAQGSYIALPLTLLVLLAGYN) threads the bilayer. Residues 1177-1222 (HDKLIPLLLQLTSRLQGVRALGQAASDNSGPEDAKRQAKKQKTRRT) are Cytoplasmic-facing. Positions 1198–1222 (GQAASDNSGPEDAKRQAKKQKTRRT) are disordered. Serine 1205 carries the post-translational modification Phosphoserine. Over residues 1213–1222 (QAKKQKTRRT) the composition is skewed to basic residues.

Component of the back of Sec61 (BOS) complex, composed of NCLN/Nicalin, NOMO (NOMO1, NOMO2 or NOMO3) and TMEM147. The BOS complex is part of the multi-pass translocon (MPT) complex, composed of three subcomplexes, the GEL complex (composed of RAB5IF/OPTI and TMCO1), the BOS complex (composed of NCLN/Nicalin, NOMO and TMEM147) and the PAT complex (composed of WDR83OS/Asterix and CCDC47). The MPT complex associates with the SEC61 complex. Due to the strong similarity between NOMO1, NOMO2 and NOMO3, similar interaction pattern probably occur for the three gene copies. As to expression, expressed in colon tumor tissue and in adjacent normal colonic mucosa.

Its subcellular location is the endoplasmic reticulum membrane. Its function is as follows. Component of the multi-pass translocon (MPT) complex that mediates insertion of multi-pass membrane proteins into the lipid bilayer of membranes. The MPT complex takes over after the SEC61 complex: following membrane insertion of the first few transmembrane segments of proteins by the SEC61 complex, the MPT complex occludes the lateral gate of the SEC61 complex to promote insertion of subsequent transmembrane regions. The protein is BOS complex subunit NOMO1 (NOMO1) of Homo sapiens (Human).